Reading from the N-terminus, the 167-residue chain is Mitochondrial fission 1 protein B (167 aa).

The stretch at 92-125 (REKLYLLALGYYRSGDFSRSRDCIERCLEVEPES) is one TPR repeat. Residues 144–164 (VIGVGIAVTAVGVVAGIAAAI) form a helical membrane-spanning segment.

The protein belongs to the FIS1 family. In terms of assembly, interacts with PEX11A, PEX11B, PEX11C, PEX11D and PEX11E.

The protein resides in the mitochondrion outer membrane. It is found in the peroxisome membrane. Component of the peroxisomal and mitochondrial division machineries. Plays a role in promoting the fission of mitochondria and peroxisomes. In association with PEX11C, PEX11D, PEX11E and DRP3A, is involved in cell cycle-associated constitutive self-replication of preexisting peroxisomes. This chain is Mitochondrial fission 1 protein B (FIS1B), found in Arabidopsis thaliana (Mouse-ear cress).